A 753-amino-acid polypeptide reads, in one-letter code: Cytoplasmic polyadenylation element-binding protein 3 (753 aa).

The disordered stretch occupies residues 111 to 286 (VGESTPSSAG…NGSWHGELPP (176 aa)). 2 stretches are compositionally biased toward basic and acidic residues: residues 131–142 (KPTEKISVDEPP) and 175–188 (FGKE…EVVK). Over residues 227–239 (SPAKISSNSSSSS) the composition is skewed to low complexity. Polar residues predominate over residues 265–279 (SRQGLSNRDNLSNGS). In terms of domain architecture, RRM spans 298-320 (IFVGGVPWDITEAALKDSFGEFG). Residues 567-589 (KAYAGPHRRPHLTSNSLSKSHGC) form a disordered region. Positions 578–589 (LTSNSLSKSHGC) are enriched in polar residues.

In terms of biological role, cytoplasmic polyadenylation element binding protein that binds to and regulates the translation of specific mRNAs. The protein is Cytoplasmic polyadenylation element-binding protein 3 (cpb-3) of Caenorhabditis briggsae.